Here is a 224-residue protein sequence, read N- to C-terminus: Ribose-5-phosphate isomerase A (224 aa).

Residues 26–29 (TGST), 81–84 (DGAD), and 94–97 (KGGG) each bind substrate. The Proton acceptor role is filled by Glu-103. Lys-121 serves as a coordination point for substrate.

It belongs to the ribose 5-phosphate isomerase family. As to quaternary structure, homodimer.

The catalysed reaction is aldehydo-D-ribose 5-phosphate = D-ribulose 5-phosphate. Its pathway is carbohydrate degradation; pentose phosphate pathway; D-ribose 5-phosphate from D-ribulose 5-phosphate (non-oxidative stage): step 1/1. Catalyzes the reversible conversion of ribose-5-phosphate to ribulose 5-phosphate. The protein is Ribose-5-phosphate isomerase A of Listeria monocytogenes serotype 4b (strain CLIP80459).